A 485-amino-acid chain; its full sequence is MKFIIKLFPEITIKSKSVRQRMVKILQGNIRNVLQKVDETVTVRNDWDKLMVSSKNDSPENRDKLVERLSCMPGIQAFLEVTQVPFTDLHDIYEQTAAVYGPTLANKTFCVRVKRKGKHEFTSIEIERYVGGGLNQNFPSNGVRLSHPDLQINLQIENELLYLVTAIHKGLGGYPLSTQEDVLSLISGGFDSGVASYLFIKRGSRVHYCFFNLGGAAHEIGVKQVAYYLWSKYSQSHKVKFVSVPFEPVVGEILEKIDNGLMGVVLKRMMMRAASRVAERMGVEALVTGESVGQVSSQTVTNLSVIDRVTDTLILRPLIVSDKQDIIDQARAIGTQEFAETMPEYCGVISNKPTVKARYEEVLANEAKFNFDVLENVITSAKVIDIREIANETEAQVQEVETTSALAENEVILDIRSPDEHEDKPFNPEGMTVIHLPFYKLSTQFGDLDQSKTYLLYCERGVMSKLQALYLKEQGFNNIKVYRQN.

In terms of domain architecture, THUMP spans 63-167 (DKLVERLSCM…NELLYLVTAI (105 aa)). Residues 185-186 (LI), Lys267, Gly289, and Gln298 each bind ATP. Cysteines 346 and 458 form a disulfide. Residues 406–485 (LAENEVILDI…FNNIKVYRQN (80 aa)) enclose the Rhodanese domain. Cys458 (cysteine persulfide intermediate) is an active-site residue.

This sequence belongs to the ThiI family.

The protein resides in the cytoplasm. It carries out the reaction [ThiI sulfur-carrier protein]-S-sulfanyl-L-cysteine + a uridine in tRNA + 2 reduced [2Fe-2S]-[ferredoxin] + ATP + H(+) = [ThiI sulfur-carrier protein]-L-cysteine + a 4-thiouridine in tRNA + 2 oxidized [2Fe-2S]-[ferredoxin] + AMP + diphosphate. It catalyses the reaction [ThiS sulfur-carrier protein]-C-terminal Gly-Gly-AMP + S-sulfanyl-L-cysteinyl-[cysteine desulfurase] + AH2 = [ThiS sulfur-carrier protein]-C-terminal-Gly-aminoethanethioate + L-cysteinyl-[cysteine desulfurase] + A + AMP + 2 H(+). It participates in cofactor biosynthesis; thiamine diphosphate biosynthesis. Its function is as follows. Catalyzes the ATP-dependent transfer of a sulfur to tRNA to produce 4-thiouridine in position 8 of tRNAs, which functions as a near-UV photosensor. Also catalyzes the transfer of sulfur to the sulfur carrier protein ThiS, forming ThiS-thiocarboxylate. This is a step in the synthesis of thiazole, in the thiamine biosynthesis pathway. The sulfur is donated as persulfide by IscS. The protein is tRNA sulfurtransferase of Tolumonas auensis (strain DSM 9187 / NBRC 110442 / TA 4).